The sequence spans 603 residues: Zyxin (603 aa).

Over residues 1-13 (MGPPPPPPPPPLL) the composition is skewed to pro residues. Disordered stretches follow at residues 1–131 (MGPP…HRDP), 166–193 (TQYA…PYSS), 218–237 (ATTT…NKYG), 310–333 (RDEG…SASS), and 363–395 (LNQP…TTST). Basic and acidic residues predominate over residues 69–95 (VRGDVENLSDGRLDRPHQQLPDGDRTY). Polar residues predominate over residues 184–193 (EATYVSPYSS). Low complexity predominate over residues 218–234 (ATTTTSSNSLNENNNSN). Polar residues-rich tracts occupy residues 315 to 333 (TESQ…SASS), 363 to 373 (LNQPADTSPSI), and 382 to 391 (PDSSRANYSA). 3 consecutive LIM zinc-binding domains span residues 409 to 470 (NICV…SLEK), 471 to 529 (CTAC…KFAP), and 530 to 601 (RCAL…RVVS).

The protein belongs to the zyxin/ajuba family. Interacts with dyc-1. Interacts with glh-1 and glh-3. As to expression, expressed in neurons and body wall muscle. Expressed in pharyngeal, enteric and uterine muscles and in spermatheca.

The protein resides in the nucleus. It is found in the cytoplasm. The protein localises to the myofibril. Its subcellular location is the sarcomere. It localises to the m line. The protein resides in the cell projection. It is found in the axon. The protein localises to the cell junction. Its subcellular location is the focal adhesion. It localises to the cytoskeleton. In terms of biological role, functions both as a mechanical stabilizer (via LIM domains) of focal adhesions, and as a sensor component for muscle cell damage (via N-terminus). Regulates, stabilizes and maintains posterior lateral mechanosensory (PLM) synaptic branch extension and new synapse formation and growth during larval development. This chain is Zyxin, found in Caenorhabditis elegans.